The following is a 369-amino-acid chain: Cyclin-dependent kinase 5 activator 2 (369 aa).

Positions 1-11 are enriched in polar residues; that stretch reads MGTVLSLSPAS. Disordered stretches follow at residues 1–55, 72–176, and 330–369; these read MGTV…SRLK, ASAK…SPRR, and EAAASTGGPPSGSSASTTSSSSARDSCATGAKHWTMNLDR. Gly2 carries N-myristoyl glycine lipidation. Over residues 74-84 the composition is skewed to basic residues; sequence AKKKKGSKKVT. Residue Thr84 is modified to Phosphothreonine. The span at 99 to 112 shows a compositional bias: basic and acidic residues; the sequence is RNRENLLRKGRDGP. A compositionally biased stretch (low complexity) spans 122-144; it reads AVPVPTVPTTAATCEPPSGGSAA. Positions 145–171 are enriched in pro residues; sequence APPPGSGGGKPPPPPPPAPQAAPPAPG. Residues 331-352 are compositionally biased toward low complexity; sequence AAASTGGPPSGSSASTTSSSSA.

This sequence belongs to the cyclin-dependent kinase 5 activator family. Heterodimer of a catalytic subunit and a regulatory subunit. Post-translationally, myristoylated. The Gly-2-Ala mutant is absent of the cell periphery, suggesting that a proper myristoylation signal is essential for the proper distribution of CDK5R2 (p39).

The protein resides in the cell membrane. Its function is as follows. Activator of CDK5/TPKII. In Mus musculus (Mouse), this protein is Cyclin-dependent kinase 5 activator 2 (Cdk5r2).